The sequence spans 461 residues: tRNA modification GTPase MnmE (461 aa).

(6S)-5-formyl-5,6,7,8-tetrahydrofolate is bound by residues Arg-27, Glu-89, and Arg-128. The region spanning 224 to 382 is the TrmE-type G domain; the sequence is GLATAIVGRP…LEELINKLFF (159 aa). Asn-234 contributes to the K(+) binding site. GTP is bound by residues 234–239, 253–259, and 278–281; these read NVGKSS, TDVAGTT, and DTAG. Residue Ser-238 participates in Mg(2+) binding. Residues Thr-253, Val-255, and Thr-258 each contribute to the K(+) site. Thr-259 contributes to the Mg(2+) binding site. Position 461 (Lys-461) interacts with (6S)-5-formyl-5,6,7,8-tetrahydrofolate.

It belongs to the TRAFAC class TrmE-Era-EngA-EngB-Septin-like GTPase superfamily. TrmE GTPase family. Homodimer. Heterotetramer of two MnmE and two MnmG subunits. The cofactor is K(+).

It is found in the cytoplasm. Exhibits a very high intrinsic GTPase hydrolysis rate. Involved in the addition of a carboxymethylaminomethyl (cmnm) group at the wobble position (U34) of certain tRNAs, forming tRNA-cmnm(5)s(2)U34. The sequence is that of tRNA modification GTPase MnmE from Lactobacillus helveticus (strain DPC 4571).